The sequence spans 93 residues: Pyrimidine/purine nucleoside phosphorylase (93 aa).

It belongs to the nucleoside phosphorylase PpnP family.

It carries out the reaction a purine D-ribonucleoside + phosphate = a purine nucleobase + alpha-D-ribose 1-phosphate. It catalyses the reaction adenosine + phosphate = alpha-D-ribose 1-phosphate + adenine. The enzyme catalyses cytidine + phosphate = cytosine + alpha-D-ribose 1-phosphate. The catalysed reaction is guanosine + phosphate = alpha-D-ribose 1-phosphate + guanine. It carries out the reaction inosine + phosphate = alpha-D-ribose 1-phosphate + hypoxanthine. It catalyses the reaction thymidine + phosphate = 2-deoxy-alpha-D-ribose 1-phosphate + thymine. The enzyme catalyses uridine + phosphate = alpha-D-ribose 1-phosphate + uracil. The catalysed reaction is xanthosine + phosphate = alpha-D-ribose 1-phosphate + xanthine. Functionally, catalyzes the phosphorolysis of diverse nucleosides, yielding D-ribose 1-phosphate and the respective free bases. Can use uridine, adenosine, guanosine, cytidine, thymidine, inosine and xanthosine as substrates. Also catalyzes the reverse reactions. The polypeptide is Pyrimidine/purine nucleoside phosphorylase (Magnetococcus marinus (strain ATCC BAA-1437 / JCM 17883 / MC-1)).